Here is a 130-residue protein sequence, read N- to C-terminus: Small ribosomal subunit protein uS9 (130 aa).

This sequence belongs to the universal ribosomal protein uS9 family.

The polypeptide is Small ribosomal subunit protein uS9 (Azotobacter vinelandii (strain DJ / ATCC BAA-1303)).